Consider the following 160-residue polypeptide: Cyclic pyranopterin monophosphate synthase (160 aa).

Substrate-binding positions include 75–77 (LCH) and 113–114 (ME). Asp128 is an active-site residue.

Belongs to the MoaC family. As to quaternary structure, homohexamer; trimer of dimers.

The enzyme catalyses (8S)-3',8-cyclo-7,8-dihydroguanosine 5'-triphosphate = cyclic pyranopterin phosphate + diphosphate. Its pathway is cofactor biosynthesis; molybdopterin biosynthesis. In terms of biological role, catalyzes the conversion of (8S)-3',8-cyclo-7,8-dihydroguanosine 5'-triphosphate to cyclic pyranopterin monophosphate (cPMP). The protein is Cyclic pyranopterin monophosphate synthase of Sodalis glossinidius (strain morsitans).